The primary structure comprises 154 residues: Aspartate carbamoyltransferase regulatory chain (154 aa).

Residues Cys111, Cys116, Cys139, and Cys142 each coordinate Zn(2+).

The protein belongs to the PyrI family. In terms of assembly, contains catalytic and regulatory chains. The cofactor is Zn(2+).

Involved in allosteric regulation of aspartate carbamoyltransferase. This is Aspartate carbamoyltransferase regulatory chain from Parabacteroides distasonis (strain ATCC 8503 / DSM 20701 / CIP 104284 / JCM 5825 / NCTC 11152).